The primary structure comprises 386 residues: Alanine racemase (386 aa).

The active-site Proton acceptor; specific for D-alanine is lysine 48. Lysine 48 is subject to N6-(pyridoxal phosphate)lysine. A substrate-binding site is contributed by arginine 147. Residue tyrosine 279 is the Proton acceptor; specific for L-alanine of the active site. Methionine 327 lines the substrate pocket.

It belongs to the alanine racemase family. Requires pyridoxal 5'-phosphate as cofactor.

It catalyses the reaction L-alanine = D-alanine. The protein operates within amino-acid biosynthesis; D-alanine biosynthesis; D-alanine from L-alanine: step 1/1. Functionally, catalyzes the interconversion of L-alanine and D-alanine. May also act on other amino acids. The sequence is that of Alanine racemase (alr) from Prochlorococcus marinus (strain SARG / CCMP1375 / SS120).